An 874-amino-acid chain; its full sequence is Alanine--tRNA ligase (874 aa).

Residues histidine 561, histidine 565, cysteine 663, and histidine 667 each coordinate Zn(2+).

This sequence belongs to the class-II aminoacyl-tRNA synthetase family. Zn(2+) is required as a cofactor.

It is found in the cytoplasm. The enzyme catalyses tRNA(Ala) + L-alanine + ATP = L-alanyl-tRNA(Ala) + AMP + diphosphate. Its function is as follows. Catalyzes the attachment of alanine to tRNA(Ala) in a two-step reaction: alanine is first activated by ATP to form Ala-AMP and then transferred to the acceptor end of tRNA(Ala). Also edits incorrectly charged Ser-tRNA(Ala) and Gly-tRNA(Ala) via its editing domain. The polypeptide is Alanine--tRNA ligase (Trichodesmium erythraeum (strain IMS101)).